Reading from the N-terminus, the 544-residue chain is Chaperonin GroEL 1 (544 aa).

Residues 30–33, lysine 51, 87–91, glycine 415, 481–483, and aspartate 497 each bind ATP; these read TLGP, DGTTT, and DAL.

Belongs to the chaperonin (HSP60) family. Forms a cylinder of 14 subunits composed of two heptameric rings stacked back-to-back. Interacts with the co-chaperonin GroES.

Its subcellular location is the cytoplasm. The enzyme catalyses ATP + H2O + a folded polypeptide = ADP + phosphate + an unfolded polypeptide.. Together with its co-chaperonin GroES, plays an essential role in assisting protein folding. The GroEL-GroES system forms a nano-cage that allows encapsulation of the non-native substrate proteins and provides a physical environment optimized to promote and accelerate protein folding. The sequence is that of Chaperonin GroEL 1 from Chlamydia pneumoniae (Chlamydophila pneumoniae).